We begin with the raw amino-acid sequence, 702 residues long: MNSLFASTARGLEELLKIELEKLGAVGCQVVQGGVHFQGDTRLIYQSLMWSRLASRIILPMGECKVYSDLDLYFGVQAINWTEIFNPGATFAVHFSGLNDTIRNSQYGAMKVKDAIVDAFTRKNLPRPNVDRESPDLRINVWLNKETASIALDLSGDGLHLRGYRDRTGLAPIKETLAAAIVMRSGWQPGTPLLDPMCGSGTLLIEAAMWATDRAPGLHRGHWGFSGWAQHDEAIWQEVKAEAQTRARKGLAEYSSHFYGSDSDARVIERARSNARRAGIGELITFEVKDVAQLSNPLPKGPYGTVISNPPYGERLDSDPALIALHSLLGRTMKNQFGGWNLSLFSASPDLLGSLQLRADKQFKAKNGPLDCVQKNYHIAETTADSKPATVAEDYANRLRKNLKKLEKWARQEGIECYRLYDADLPEYNVAVDRYGDWAVIQEYAPPKTVDAQKARQRLFDIIAATLSVLGIPPNKLVLKTRERQKGKNQYQKMSEKGEFLEVSEYNARLWVNLTDYLDTGLFLDHRIARRMLGEMSKGKDFLNLFSYTGSASVHAGLGGARNTTTVDMSRTYLEWAERNLRLNGLSGRAHRLIQADCLGWLREANEQFDLIFIDPPTFSNSKRMEESFDVQRDHVALMKDLKRLLRKGGTIMFSNNKRGFRMDLEGLAELGLTAQEITQKTLSPDFARNRQIHNCWLIRAA.

The 112-residue stretch at 43–154 (LIYQSLMWSR…KETASIALDL (112 aa)) folds into the THUMP domain.

This sequence belongs to the methyltransferase superfamily. RlmKL family.

The protein localises to the cytoplasm. The catalysed reaction is guanosine(2445) in 23S rRNA + S-adenosyl-L-methionine = N(2)-methylguanosine(2445) in 23S rRNA + S-adenosyl-L-homocysteine + H(+). It carries out the reaction guanosine(2069) in 23S rRNA + S-adenosyl-L-methionine = N(2)-methylguanosine(2069) in 23S rRNA + S-adenosyl-L-homocysteine + H(+). Specifically methylates the guanine in position 2445 (m2G2445) and the guanine in position 2069 (m7G2069) of 23S rRNA. This Salmonella typhi protein is Ribosomal RNA large subunit methyltransferase K/L.